The chain runs to 748 residues: Protein REPRESSOR OF SILENCING 3 (748 aa).

Positions V10–E86 constitute an RRM domain. Disordered regions lie at residues K244 to D318, G350 to T531, V579 to S600, and E729 to E748. The span at T266 to A288 shows a compositional bias: polar residues. A compositionally biased stretch (basic and acidic residues) spans K294–E314. Positions L373–V382 are enriched in basic residues. 3 stretches are compositionally biased toward acidic residues: residues D403–A416, D439–E472, and E491–S518. Residues D520–T531 are compositionally biased toward polar residues.

In terms of tissue distribution, ubiquitously expressed.

It is found in the nucleus. It localises to the nucleolus. The protein resides in the nucleoplasm. In terms of biological role, RNA-binding protein required for DNA demethylation and to eluviate siRNA-mediated transcriptional gene silencing (TGS), probably by guiding ROS1. Can bind specifically single stranded G-rich RNAs of 21-, 24- or 26-nt corresponding to promoter sequence of target genes; this interaction directs demethylation of target sequences. This Arabidopsis thaliana (Mouse-ear cress) protein is Protein REPRESSOR OF SILENCING 3.